The following is a 352-amino-acid chain: 7,8-didemethyl-8-hydroxy-5-deazariboflavin synthase (352 aa).

In terms of domain architecture, Radical SAM core spans 35–275 (ITFSKNAFIP…EDISIQVPPN (241 aa)). [4Fe-4S] cluster-binding residues include Cys49, Cys53, and Cys56.

This sequence belongs to the radical SAM superfamily. CofG family. As to quaternary structure, consists of two subunits, CofG and CofH. [4Fe-4S] cluster serves as cofactor.

It carries out the reaction 5-amino-5-(4-hydroxybenzyl)-6-(D-ribitylimino)-5,6-dihydrouracil + S-adenosyl-L-methionine = 7,8-didemethyl-8-hydroxy-5-deazariboflavin + 5'-deoxyadenosine + L-methionine + NH4(+) + H(+). The protein operates within cofactor biosynthesis; coenzyme F0 biosynthesis. Its function is as follows. Catalyzes the radical-mediated synthesis of 7,8-didemethyl-8-hydroxy-5-deazariboflavin from 5-amino-5-(4-hydroxybenzyl)-6-(D-ribitylimino)-5,6-dihydrouracil. The protein is 7,8-didemethyl-8-hydroxy-5-deazariboflavin synthase of Methanococcus maripaludis (strain C6 / ATCC BAA-1332).